We begin with the raw amino-acid sequence, 198 residues long: Uracil phosphoribosyltransferase homolog (198 aa).

This sequence belongs to the UPRTase family.

It localises to the plastid. Its subcellular location is the chloroplast. In Porphyra purpurea (Red seaweed), this protein is Uracil phosphoribosyltransferase homolog.